We begin with the raw amino-acid sequence, 90 residues long: Small ribosomal subunit protein bS16 (90 aa).

It belongs to the bacterial ribosomal protein bS16 family.

This is Small ribosomal subunit protein bS16 from Streptococcus agalactiae serotype III (strain NEM316).